Here is a 138-residue protein sequence, read N- to C-terminus: Small ribosomal subunit protein uS11c (138 aa).

The disordered stretch occupies residues 1–23 (MAKAIPRVGSRKNGRISSRKSAR). Basic residues predominate over residues 9 to 23 (GSRKNGRISSRKSAR).

Belongs to the universal ribosomal protein uS11 family. As to quaternary structure, part of the 30S ribosomal subunit.

The protein resides in the plastid. It localises to the chloroplast. In Coffea arabica (Arabian coffee), this protein is Small ribosomal subunit protein uS11c.